Reading from the N-terminus, the 349-residue chain is 6-phosphogluconolactonase (349 aa).

The interval 125–151 (LQSPVSEAAHTGKGPHERQEKPHTHYA) is disordered. The segment covering 138–147 (GPHERQEKPH) has biased composition (basic and acidic residues).

This sequence belongs to the cycloisomerase 2 family.

The enzyme catalyses 6-phospho-D-glucono-1,5-lactone + H2O = 6-phospho-D-gluconate + H(+). It participates in carbohydrate degradation; pentose phosphate pathway; D-ribulose 5-phosphate from D-glucose 6-phosphate (oxidative stage): step 2/3. In terms of biological role, catalyzes the hydrolysis of 6-phosphogluconolactone to 6-phosphogluconate. This chain is 6-phosphogluconolactonase (pgl), found in Bacillus subtilis (strain 168).